The primary structure comprises 972 residues: uncharacterized protein (972 aa).

The N-terminal stretch at 1–21 (MTNMILLSAVFLSLAILETHC) is a signal peptide. Residues 22-932 (ANHISTGIST…KELGEKLYHV (911 aa)) are Extracellular-facing. Positions 892 to 912 (EPTVTTTTESPPPPTTTTRQI) are disordered. A helical transmembrane segment spans residues 933–953 (LFFMGVLTVSVAGGVIILSFI). Residues 954–972 (GCLIMRKMEDAPQKTKYSV) lie on the Cytoplasmic side of the membrane.

Its subcellular location is the host membrane. This is an uncharacterized protein from Magallana gigas (Pacific oyster).